Reading from the N-terminus, the 413-residue chain is MQVYLVGGAVRDHLLGHPYHEKDYVVVGASPQQLLDQGFSPVGKDFPVFLHPKTKEEYALARTERKSGIGYHGFNFFTDPDVSLEDDLIRRDLTINAMAMDQDGNVYDPYGGQKDLEQRILRHVSDAFIEDPLRVLRVARFAARYARYGFKIADETLLLMQSITQTGELESLTAERVWKETSRALMEDQADIYFDVLRQCHALKVLFPEIDALFGVPQRPEYHPEIDCGIHTLMSLRQACKSNYSLDVRYAVLVHDLGKALTPKDILPRHIMHEERGLIPVEELSNRLKIPTQMKQLALAVCKEHLKCHQAMSLKPGTLWRLLQRLDVLRRPERVEAFINACECDARGRLGLENRDYPQAAFMFKAMQVVRSIKAQDLPAYIQGSEIGEKLIQYRIDALAELKKQYDDSLATE.

ATP is bound by residues G8 and R11. 2 residues coordinate CTP: G8 and R11. 2 residues coordinate Mg(2+): E21 and D23. 3 residues coordinate ATP: R91, R137, and R140. CTP is bound by residues R91, R137, and R140. The HD domain occupies 228–329 (CGIHTLMSLR…WRLLQRLDVL (102 aa)).

This sequence belongs to the tRNA nucleotidyltransferase/poly(A) polymerase family. Bacterial CCA-adding enzyme type 1 subfamily. In terms of assembly, monomer. Can also form homodimers and oligomers. Mg(2+) is required as a cofactor. The cofactor is Ni(2+).

It catalyses the reaction a tRNA precursor + 2 CTP + ATP = a tRNA with a 3' CCA end + 3 diphosphate. The catalysed reaction is a tRNA with a 3' CCA end + 2 CTP + ATP = a tRNA with a 3' CCACCA end + 3 diphosphate. In terms of biological role, catalyzes the addition and repair of the essential 3'-terminal CCA sequence in tRNAs without using a nucleic acid template. Adds these three nucleotides in the order of C, C, and A to the tRNA nucleotide-73, using CTP and ATP as substrates and producing inorganic pyrophosphate. tRNA 3'-terminal CCA addition is required both for tRNA processing and repair. Also involved in tRNA surveillance by mediating tandem CCA addition to generate a CCACCA at the 3' terminus of unstable tRNAs. While stable tRNAs receive only 3'-terminal CCA, unstable tRNAs are marked with CCACCA and rapidly degraded. The sequence is that of Multifunctional CCA protein from Acinetobacter baylyi (strain ATCC 33305 / BD413 / ADP1).